Reading from the N-terminus, the 439-residue chain is Dihydroorotase (439 aa).

Zn(2+)-binding residues include histidine 73 and histidine 75. Residues 75–77 and asparagine 107 contribute to the substrate site; that span reads HLR. Zn(2+) contacts are provided by aspartate 165, histidine 192, and histidine 245. Asparagine 291 lines the substrate pocket. Aspartate 318 is a Zn(2+) binding site. Residue aspartate 318 is part of the active site. Histidine 322 lines the substrate pocket.

It belongs to the metallo-dependent hydrolases superfamily. DHOase family. Class I DHOase subfamily. The cofactor is Zn(2+).

The enzyme catalyses (S)-dihydroorotate + H2O = N-carbamoyl-L-aspartate + H(+). It functions in the pathway pyrimidine metabolism; UMP biosynthesis via de novo pathway; (S)-dihydroorotate from bicarbonate: step 3/3. Functionally, catalyzes the reversible cyclization of carbamoyl aspartate to dihydroorotate. The sequence is that of Dihydroorotase from Syntrophobacter fumaroxidans (strain DSM 10017 / MPOB).